The following is a 98-amino-acid chain: YcgL domain-containing protein Ping_1076 (98 aa).

The 85-residue stretch at 1 to 85 folds into the YcgL domain; it reads MLCAVYKSIR…PPVNHLQEHK (85 aa). Residues 75–98 are disordered; it reads PPPVNHLQEHKDWKKKRQENKNEI.

The protein is YcgL domain-containing protein Ping_1076 of Psychromonas ingrahamii (strain DSM 17664 / CCUG 51855 / 37).